Consider the following 258-residue polypeptide: GPI alpha-1,4-mannosyltransferase I, stabilizing subunit (258 aa).

An N-terminal signal peptide occupies residues 1–21; it reads MAARVAAVRAAAWLLLGAATG. The Lumenal segment spans residues 22–230; it reads LTRGPAAAFT…PVGLTVHTSL (209 aa). N-linked (GlcNAc...) asparagine glycosylation is present at Asn-103. The chain crosses the membrane as a helical span at residues 231–251; it reads VCSVTLLITILCSTLILVAVF. The Cytoplasmic segment spans residues 252–258; it reads KYGHFSL.

This sequence belongs to the PIGX family. Part of the glycosylphosphatidylinositol-mannosyltransferase I complex that is composed of PIGM and PIGX. Interacts with PIGM; PIGX stabilizes PIGM.

The protein localises to the endoplasmic reticulum membrane. The protein operates within glycolipid biosynthesis; glycosylphosphatidylinositol-anchor biosynthesis. Its function is as follows. Stabilizing subunit of the glycosylphosphatidylinositol-mannosyltransferase I complex which catalyzes the transfer of the first mannose, via an alpha-1,4 bond from a dolichol-phosphate-mannose (Dol-P-Man) to the glucosaminyl acyl phosphatidylinositol (GlcN-(acyl)PI) intermediate to generate alpha-D-Man-(1-&gt;4)-alpha-D-GlcN-(1-&gt;6)-(1-radyl,2-acyl-sn-glycero-3-phospho)-2-acyl-inositol and participates in the sixth step of the glycosylphosphatidylinositol-anchor biosynthesis. Probably acts by stabilizing the mannosyltransferase PIGM. This Homo sapiens (Human) protein is GPI alpha-1,4-mannosyltransferase I, stabilizing subunit.